The chain runs to 285 residues: Bifunctional protein FolD (285 aa).

NADP(+)-binding positions include 166–168 (GAS) and isoleucine 232.

Belongs to the tetrahydrofolate dehydrogenase/cyclohydrolase family. In terms of assembly, homodimer.

The catalysed reaction is (6R)-5,10-methylene-5,6,7,8-tetrahydrofolate + NADP(+) = (6R)-5,10-methenyltetrahydrofolate + NADPH. The enzyme catalyses (6R)-5,10-methenyltetrahydrofolate + H2O = (6R)-10-formyltetrahydrofolate + H(+). Its pathway is one-carbon metabolism; tetrahydrofolate interconversion. Catalyzes the oxidation of 5,10-methylenetetrahydrofolate to 5,10-methenyltetrahydrofolate and then the hydrolysis of 5,10-methenyltetrahydrofolate to 10-formyltetrahydrofolate. This chain is Bifunctional protein FolD, found in Aliivibrio salmonicida (strain LFI1238) (Vibrio salmonicida (strain LFI1238)).